Here is a 409-residue protein sequence, read N- to C-terminus: NADH-quinone oxidoreductase subunit D (409 aa).

Belongs to the complex I 49 kDa subunit family. NDH-1 is composed of 14 different subunits. Subunits NuoB, C, D, E, F, and G constitute the peripheral sector of the complex.

Its subcellular location is the cell inner membrane. The enzyme catalyses a quinone + NADH + 5 H(+)(in) = a quinol + NAD(+) + 4 H(+)(out). In terms of biological role, NDH-1 shuttles electrons from NADH, via FMN and iron-sulfur (Fe-S) centers, to quinones in the respiratory chain. The immediate electron acceptor for the enzyme in this species is believed to be ubiquinone. Couples the redox reaction to proton translocation (for every two electrons transferred, four hydrogen ions are translocated across the cytoplasmic membrane), and thus conserves the redox energy in a proton gradient. The chain is NADH-quinone oxidoreductase subunit D (nuoD) from Thermus thermophilus (strain ATCC BAA-163 / DSM 7039 / HB27).